The primary structure comprises 496 residues: Transmembrane protein 104 (496 aa).

Topologically, residues 1–10 (MAGEITETGE) are cytoplasmic. A helical membrane pass occupies residues 11-31 (LYSPYVGLVYMFNLIVGTGAL). At 32–36 (TMPKA) the chain is on the extracellular side. A helical membrane pass occupies residues 37-57 (FATAGWLVSLVLLVFVGFMSF). The Cytoplasmic portion of the chain corresponds to 58 to 146 (VTTTFAMEAM…SMFFNKVGVN (89 aa)). The tract at residues 81 to 100 (THKEEDDEDSSTASDSDLLS) is disordered. Residues 91 to 100 (STASDSDLLS) are compositionally biased toward low complexity. Residues 147 to 167 (LFYFCIITYLYGDLAIYAAAV) traverse the membrane as a helical segment. At 168 to 204 (PVSLMQVTCSVSGNDSCGVDTDARYNDTDLCWGPLRR) the chain is on the extracellular side. Residue Asn193 is glycosylated (N-linked (GlcNAc...) asparagine). A helical transmembrane segment spans residues 205–225 (VDVYRIYLAIFTVLLGPFTFF). Over 226–233 (DVQKTKYL) the chain is Cytoplasmic. Residues 234–254 (QILTSMMRWIAFAIMIVLALV) form a helical membrane-spanning segment. Residues 255–265 (RIGKGQGEGHP) are Extracellular-facing. The chain crosses the membrane as a helical span at residues 266-286 (PLANFLGVQNLFGVCVYSFMC). Topologically, residues 287-306 (QHSLPSLITPISSKRHITRL) are cytoplasmic. A helical membrane pass occupies residues 307 to 327 (LFLDYALILAFYGLLSFTAIF). Residues 328 to 354 (CFRGDSLMDMYTLNFARCDVVGLAAVR) lie on the Extracellular side of the membrane. A helical transmembrane segment spans residues 355 to 375 (FFLGLFPVFTISTNFPIIAVT). Topologically, residues 376-397 (LRNNWKTLFHREGGTYPWVVDR) are cytoplasmic. Residues 398–418 (VVFPTITLVPPILVAFCTHDL) form a helical membrane-spanning segment. Over 419–421 (ESL) the chain is Extracellular. The helical transmembrane segment at 422–442 (VAITGAYAGTGIQYVIPAFLV) threads the bilayer. Residues 443–470 (YLCRKDTQLTFGYGTVNKHRSPFRHTFW) lie on the Cytoplasmic side of the membrane. The chain crosses the membrane as a helical span at residues 471–491 (VAFVLLWAFSCFFFVTAYIVL). The Extracellular segment spans residues 492–496 (KETQL).

Belongs to the TMEM104 family.

Its subcellular location is the membrane. In Mus musculus (Mouse), this protein is Transmembrane protein 104 (Tmem104).